Reading from the N-terminus, the 533-residue chain is MKLLAVRRLLRIQRVVIRYRLDDLILELPMLPWWLRLLGATLPWRWLPRRKLELTRGARLRLALQDLGPIFIKFGQILSTRRDLLPDDIANELAWLQDKVPPFPPELAVKRIEEQLGAKIEQVFARFEREPLASASVAQVHAARLKSGEEVVVKVIRPNLEPVIRSDIAWLFILARLAERVSSEARRLHPVEVVSDYEKTIVDELDLLREAANASQLRRNFEGSPLLYVPQVYWDWCRPKVLVMERIYGIPVTDLETLRDQRTDFKALAERGVEIFFTQVFRDSFFHADMHPGNIFVSTRAPWSPQYIAVDCGIVGSLTDEDQDYLARNLIAFFKRDYRKVAQLHIDSGWVPAETKVNDFEAAIRTVCEPIFEKPLKDISFGQVLLRLFQTARRFNMEIQPQLVLLQKTLLNIEGLGRQLYPELDLWATAQPFLERWMRERVSPKQLLRNFQQQVEQVPHLSQMARDTLERLSQPHAHNAPPPEWKGSRHDWLGRLVGAVLLVGAAEVGLGQQLEAWPAWVMLAGGVFLILRR.

Residues 24-44 (LILELPMLPWWLRLLGATLPW) form a helical membrane-spanning segment. Residues 126-494 (RFEREPLASA…WKGSRHDWLG (369 aa)) form the Protein kinase domain. Residues 132-140 (LASASVAQV) and lysine 154 each bind ATP. Aspartate 289 (proton acceptor) is an active-site residue. The chain crosses the membrane as a helical span at residues 510–530 (LGQQLEAWPAWVMLAGGVFLI).

Belongs to the ABC1 family. UbiB subfamily.

The protein resides in the cell inner membrane. It functions in the pathway cofactor biosynthesis; ubiquinone biosynthesis [regulation]. Its function is as follows. Is probably a protein kinase regulator of UbiI activity which is involved in aerobic coenzyme Q (ubiquinone) biosynthesis. The protein is Probable protein kinase UbiB of Pseudomonas aeruginosa (strain ATCC 15692 / DSM 22644 / CIP 104116 / JCM 14847 / LMG 12228 / 1C / PRS 101 / PAO1).